Here is a 401-residue protein sequence, read N- to C-terminus: Argininosuccinate synthase (401 aa).

Position 8-16 (8-16 (AYSGGLDTS)) interacts with ATP. L-citrulline-binding residues include Tyr86 and Ser91. Residue Gly116 participates in ATP binding. L-aspartate-binding residues include Thr118, Asn122, and Asp123. Asn122 is an L-citrulline binding site. Residues Arg126, Ser175, Ser184, Glu260, and Tyr272 each contribute to the L-citrulline site.

It belongs to the argininosuccinate synthase family. Type 1 subfamily. As to quaternary structure, homotetramer.

The protein localises to the cytoplasm. It carries out the reaction L-citrulline + L-aspartate + ATP = 2-(N(omega)-L-arginino)succinate + AMP + diphosphate + H(+). It participates in amino-acid biosynthesis; L-arginine biosynthesis; L-arginine from L-ornithine and carbamoyl phosphate: step 2/3. The chain is Argininosuccinate synthase from Clostridium kluyveri (strain ATCC 8527 / DSM 555 / NBRC 12016 / NCIMB 10680 / K1).